The sequence spans 500 residues: MSHHSSWRGHHCAPGDNNCTAGFKESLGSKNYKLLHVPFHGPTHSHHHEPPHPFPTVDVPDHAHYIIGAVILIVGITGVIGNALVIYVFCRSRTLRTAGNMFVVNLAVADFFMSLTQSPVFFAASLHRRWIFGERICELYAFCGALFGICSMMTLTAIAADRCLAITQPLALVGNVSRRKAGAVLAVVWLYSLGWSLPPFFGWSAYVPEGLQTSCSWDYMTFTPSVRAYTILLFIFVFFIPLGIIVSCYVGIFQAIRAMGKEIRELDCGETQKVYERMQNEWKMAKIALLVILLFVISWSPYSVVALTATAGYSHLLTPYMNSVPAVIAKASAIHNPIIYAITHPKYRAAIARYIPVLRTILRVKEKELRSSFSSGSVSSRRPTLSSQCSLGVSIGNAARANGRWGKKRLSSASDSDSCWTESEADGSSVSSLTFGRRVSTEISTDTVILSPGSSNSTASGQKSEKAHKVVSVPVPSITFETDSADESLSDGKALLLGGN.

Topologically, residues 1-65 are extracellular; sequence MSHHSSWRGH…TVDVPDHAHY (65 aa). Residue Asn18 is glycosylated (N-linked (GlcNAc...) asparagine). The helical transmembrane segment at 66–86 threads the bilayer; it reads IIGAVILIVGITGVIGNALVI. Over 87 to 101 the chain is Cytoplasmic; that stretch reads YVFCRSRTLRTAGNM. Residues 102–122 traverse the membrane as a helical segment; it reads FVVNLAVADFFMSLTQSPVFF. The Extracellular segment spans residues 123-138; sequence AASLHRRWIFGERICE. Residues Cys137 and Cys215 are joined by a disulfide bond. Residues 139-159 traverse the membrane as a helical segment; the sequence is LYAFCGALFGICSMMTLTAIA. Over 160-182 the chain is Cytoplasmic; that stretch reads ADRCLAITQPLALVGNVSRRKAG. Residues 183–203 traverse the membrane as a helical segment; the sequence is AVLAVVWLYSLGWSLPPFFGW. Topologically, residues 204–232 are extracellular; the sequence is SAYVPEGLQTSCSWDYMTFTPSVRAYTIL. A helical transmembrane segment spans residues 233–253; the sequence is LFIFVFFIPLGIIVSCYVGIF. Residues 254 to 286 are Cytoplasmic-facing; it reads QAIRAMGKEIRELDCGETQKVYERMQNEWKMAK. A helical membrane pass occupies residues 287 to 307; it reads IALLVILLFVISWSPYSVVAL. Residues 308–322 lie on the Extracellular side of the membrane; sequence TATAGYSHLLTPYMN. The helical transmembrane segment at 323–343 threads the bilayer; the sequence is SVPAVIAKASAIHNPIIYAIT. Lys330 carries the post-translational modification N6-(retinylidene)lysine. Topologically, residues 344 to 500 are cytoplasmic; sequence HPKYRAAIAR…DGKALLLGGN (157 aa). 3 disordered regions span residues 406-428, 448-470, and 481-500; these read GKKR…ADGS, VILS…AHKV, and ETDS…LGGN. Composition is skewed to polar residues over residues 411 to 428 and 448 to 462; these read SSAS…ADGS and VILS…ASGQ.

The protein belongs to the G-protein coupled receptor 1 family. Opsin subfamily. In terms of tissue distribution, expressed in a subset of retinal horizontal cells as well as in retinal ganglion cells.

The protein localises to the cell membrane. Its function is as follows. Photoreceptor implicated in non-image-forming responses to light. This chain is Melanopsin (opn4), found in Rutilus rutilus (Roach).